A 340-amino-acid polypeptide reads, in one-letter code: Citramalyl-CoA lyase, mitochondrial (340 aa).

Residues 1–22 (MALRLLRRAARGAAAAALLRLK) constitute a mitochondrion transit peptide. Residues tyrosine 50, lysine 57, and lysine 61 each coordinate substrate. An N6-acetyllysine mark is found at lysine 57 and lysine 61. Residues lysine 82 and lysine 92 each carry the N6-acetyllysine; alternate modification. 2 positions are modified to N6-succinyllysine; alternate: lysine 82 and lysine 92. Arginine 107 is a substrate binding site. The Mg(2+) site is built by glutamate 171 and aspartate 206. 272–273 (IH) is a substrate binding site. Lysine 309 bears the N6-succinyllysine mark. The active site involves aspartate 320.

The protein belongs to the HpcH/HpaI aldolase family. Citrate lyase beta subunit-like subfamily. Homotrimer. It depends on Mg(2+) as a cofactor.

The protein localises to the mitochondrion. It catalyses the reaction glyoxylate + acetyl-CoA + H2O = (S)-malate + CoA + H(+). It carries out the reaction propanoyl-CoA + glyoxylate + H2O = 3-methylmalate + CoA + H(+). The enzyme catalyses (3S)-citramalyl-CoA = pyruvate + acetyl-CoA. The catalysed reaction is (S)-malyl-CoA + H2O = (S)-malate + CoA + H(+). Its function is as follows. Mitochondrial citramalyl-CoA lyase indirectly involved in the vitamin B12 metabolism. Converts citramalyl-CoA into acetyl-CoA and pyruvate in the C5-dicarboxylate catabolism pathway. The C5-dicarboxylate catabolism pathway is required to detoxify itaconate, a vitamin B12-poisoning metabolite. Also acts as a malate synthase in vitro, converting glyoxylate and acetyl-CoA to malate. Also displays malyl-CoA thioesterase activity. Also acts as a beta-methylmalate synthase in vitro, by mediating conversion of glyoxylate and propionyl-CoA to beta-methylmalate. Also has very weak citramalate synthase activity in vitro. This Homo sapiens (Human) protein is Citramalyl-CoA lyase, mitochondrial.